The chain runs to 460 residues: L-seryl-tRNA(Sec) selenium transferase (460 aa).

Lys293 bears the N6-(pyridoxal phosphate)lysine mark.

It belongs to the SelA family. Pyridoxal 5'-phosphate serves as cofactor.

The protein localises to the cytoplasm. The catalysed reaction is L-seryl-tRNA(Sec) + selenophosphate + H(+) = L-selenocysteinyl-tRNA(Sec) + phosphate. The protein operates within aminoacyl-tRNA biosynthesis; selenocysteinyl-tRNA(Sec) biosynthesis; selenocysteinyl-tRNA(Sec) from L-seryl-tRNA(Sec) (bacterial route): step 1/1. Converts seryl-tRNA(Sec) to selenocysteinyl-tRNA(Sec) required for selenoprotein biosynthesis. In Haemophilus ducreyi (strain 35000HP / ATCC 700724), this protein is L-seryl-tRNA(Sec) selenium transferase.